Here is a 316-residue protein sequence, read N- to C-terminus: UDP-N-acetylenolpyruvoylglucosamine reductase (316 aa).

Positions 27–225 (VGGKAERFYR…KTAINALLKK (199 aa)) constitute an FAD-binding PCMH-type domain. R190 is a catalytic residue. Residue S239 is the Proton donor of the active site. E309 is an active-site residue.

Belongs to the MurB family. Requires FAD as cofactor.

It is found in the cytoplasm. The catalysed reaction is UDP-N-acetyl-alpha-D-muramate + NADP(+) = UDP-N-acetyl-3-O-(1-carboxyvinyl)-alpha-D-glucosamine + NADPH + H(+). The protein operates within cell wall biogenesis; peptidoglycan biosynthesis. Functionally, cell wall formation. The polypeptide is UDP-N-acetylenolpyruvoylglucosamine reductase (Coxiella burnetii (strain Dugway 5J108-111)).